The primary structure comprises 889 residues: Mixed-linked glucan synthase 2 (889 aa).

A disordered region spans residues 34–53; the sequence is AGADGQNGRRSPVAKRVNDG. Transmembrane regions (helical) follow at residues 93–113 and 123–143; these read ILHP…AFFA and GVWL…SWVL. The active site involves D213. Positions 265-293 form a coiled coil; the sequence is ELMSDHRRVRREYEEFKVRIDSLSSTIRQ. 2 residues coordinate substrate: D411 and D413. The active site involves D579. 6 helical membrane passes run 655-675, 685-705, 723-743, 777-797, 811-831, and 842-862; these read TYPI…MWLI, FGEY…IGMF, FYMI…ALKL, LLIP…VAVG, LAVL…PFAL, and AVLF…YVAF.

This sequence belongs to the glycosyltransferase 2 family. Plant cellulose synthase-like F subfamily.

The protein localises to the golgi apparatus membrane. In terms of biological role, catalyzes both beta-1,3 and beta-1,4 glycosidic linkage on beta-D-glucan. Essential for (1,3;1,4)-beta-D-glucans synthesis in grasses and cereals (Poaceae). The mixed-linked glucans (which are not present in walls of dicotyledons or most other monocotyledonous plants) are particularly important constituents of the walls of the starchy endosperm and aleurone cells of cereal grains such as oats, wheat, rice and barley. They can account for up to 70% by weight of the wall. The polypeptide is Mixed-linked glucan synthase 2 (CSLF2) (Oryza sativa subsp. japonica (Rice)).